A 498-amino-acid polypeptide reads, in one-letter code: Glycerol kinase (498 aa).

Threonine 11 serves as a coordination point for ADP. Residues threonine 11, serine 12, and serine 13 each coordinate ATP. Threonine 11 is a binding site for sn-glycerol 3-phosphate. Arginine 15 lines the ADP pocket. Sn-glycerol 3-phosphate is bound by residues arginine 81, glutamate 82, tyrosine 133, and aspartate 242. Arginine 81, glutamate 82, tyrosine 133, aspartate 242, and glutamine 243 together coordinate glycerol. Residues threonine 264 and glycine 307 each contribute to the ADP site. ATP-binding residues include threonine 264, glycine 307, glutamine 311, and glycine 412. Positions 412 and 416 each coordinate ADP.

Belongs to the FGGY kinase family.

The catalysed reaction is glycerol + ATP = sn-glycerol 3-phosphate + ADP + H(+). Its pathway is polyol metabolism; glycerol degradation via glycerol kinase pathway; sn-glycerol 3-phosphate from glycerol: step 1/1. With respect to regulation, inhibited by fructose 1,6-bisphosphate (FBP). Its function is as follows. Key enzyme in the regulation of glycerol uptake and metabolism. Catalyzes the phosphorylation of glycerol to yield sn-glycerol 3-phosphate. The sequence is that of Glycerol kinase from Acidovorax sp. (strain JS42).